The chain runs to 305 residues: N-acetylneuraminate lyase A (305 aa).

Residues T51 and T52 each coordinate aceneuramate. Catalysis depends on Y143, which acts as the Proton donor. K173 acts as the Schiff-base intermediate with substrate in catalysis. Residues S175, G197, D199, E200, and S216 each contribute to the aceneuramate site.

It belongs to the DapA family. NanA subfamily. As to quaternary structure, homotetramer.

It is found in the cytoplasm. The catalysed reaction is aceneuramate = aldehydo-N-acetyl-D-mannosamine + pyruvate. It participates in amino-sugar metabolism; N-acetylneuraminate degradation. In terms of biological role, catalyzes the cleavage of N-acetylneuraminic acid (sialic acid) to form pyruvate and N-acetylmannosamine via a Schiff base intermediate. It prevents sialic acids from being recycled and returning to the cell surface. Involved in the N-glycolylneuraminic acid (Neu5Gc) degradation pathway. This is N-acetylneuraminate lyase A (npl-a) from Xenopus laevis (African clawed frog).